Reading from the N-terminus, the 351-residue chain is MKNSNKLIASVVTLASVMALAACQSTNDNTKVISMKGDTISVSDFYNETKNTEVSQKAMLNLVISRVFEAQYGDKVSKKEVEKAYHKTAEQYGASFSAALAQSSLTPETFKRQIRSSKLVEYAVKEAAKKELTTQEYKKAYESYTPTMAVEMITLDNDETAKSVLEELKAEGADFTAIAKEKTTTPEKKVTYKFDSGAINVPTDVVKAASSLNEGGISDVISVLDPTSYQKKFYIVKVTKKAEKKSDWQEYKKRLKAIIIAEKSKDMNFQNKVIANALDKANVKIKDKAFANILAQYANLGQKTKAASESSTTSESSKAAEENPSESEQTQTSSAEEPTETEAQTQEPAAQ.

The N-terminal stretch at 1–22 (MKNSNKLIASVVTLASVMALAA) is a signal peptide. Cysteine 23 carries N-palmitoyl cysteine lipidation. Residue cysteine 23 is the site of S-diacylglycerol cysteine attachment. The PpiC domain maps to 145–240 (TPTMAVEMIT…KKFYIVKVTK (96 aa)). Composition is skewed to low complexity over residues 303–317 (KTKAASESSTTSESS) and 326–351 (ESEQTQTSSAEEPTETEAQTQEPAAQ). The disordered stretch occupies residues 303 to 351 (KTKAASESSTTSESSKAAEENPSESEQTQTSSAEEPTETEAQTQEPAAQ).

The protein belongs to the PrsA family.

Its subcellular location is the cell membrane. The enzyme catalyses [protein]-peptidylproline (omega=180) = [protein]-peptidylproline (omega=0). Plays a major role in protein secretion by helping the post-translocational extracellular folding of several secreted proteins. This is Foldase protein PrsA 1 (prsA1) from Streptococcus pyogenes serotype M18 (strain MGAS8232).